Here is a 621-residue protein sequence, read N- to C-terminus: Auxin response factor 13 (621 aa).

A DNA-binding region (TF-B3) is located at residues 124 to 228; sequence FSKILTASDV…ELRFGIRRAK (105 aa). A PB1 domain is found at 508–600; the sequence is RSRIKVHMQG…EIKKMKLKNK (93 aa).

The protein belongs to the ARF family. In terms of assembly, homodimers and heterodimers.

The protein localises to the nucleus. In terms of biological role, auxin response factors (ARFs) are transcriptional factors that bind specifically to the DNA sequence 5'-TGTCTC-3' found in the auxin-responsive promoter elements (AuxREs). Could act as transcriptional activator or repressor. Formation of heterodimers with Aux/IAA proteins may alter their ability to modulate early auxin response genes expression. This chain is Auxin response factor 13 (ARF13), found in Arabidopsis thaliana (Mouse-ear cress).